Here is a 199-residue protein sequence, read N- to C-terminus: Recombination protein RecR (199 aa).

The C4-type zinc finger occupies 58–73 (CQRCNNFSEEAVCQRC). The Toprim domain occupies 81–176 (ATLCVVEMPA…KVSRISRGVP (96 aa)).

It belongs to the RecR family.

In terms of biological role, may play a role in DNA repair. It seems to be involved in an RecBC-independent recombinational process of DNA repair. It may act with RecF and RecO. The sequence is that of Recombination protein RecR from Azoarcus sp. (strain BH72).